A 238-amino-acid chain; its full sequence is Ribonuclease PH (238 aa).

Phosphate-binding positions include Arg86 and 124–126 (GTR).

It belongs to the RNase PH family. Homohexameric ring arranged as a trimer of dimers.

It catalyses the reaction tRNA(n+1) + phosphate = tRNA(n) + a ribonucleoside 5'-diphosphate. Its function is as follows. Phosphorolytic 3'-5' exoribonuclease that plays an important role in tRNA 3'-end maturation. Removes nucleotide residues following the 3'-CCA terminus of tRNAs; can also add nucleotides to the ends of RNA molecules by using nucleoside diphosphates as substrates, but this may not be physiologically important. Probably plays a role in initiation of 16S rRNA degradation (leading to ribosome degradation) during starvation. The chain is Ribonuclease PH from Hahella chejuensis (strain KCTC 2396).